A 486-amino-acid polypeptide reads, in one-letter code: Glutamyl-tRNA(Gln) amidotransferase subunit A (486 aa).

Catalysis depends on charge relay system residues lysine 76 and serine 151. The Acyl-ester intermediate role is filled by serine 175.

This sequence belongs to the amidase family. GatA subfamily. As to quaternary structure, heterotrimer of A, B and C subunits.

The catalysed reaction is L-glutamyl-tRNA(Gln) + L-glutamine + ATP + H2O = L-glutaminyl-tRNA(Gln) + L-glutamate + ADP + phosphate + H(+). Functionally, allows the formation of correctly charged Gln-tRNA(Gln) through the transamidation of misacylated Glu-tRNA(Gln) in organisms which lack glutaminyl-tRNA synthetase. The reaction takes place in the presence of glutamine and ATP through an activated gamma-phospho-Glu-tRNA(Gln). The sequence is that of Glutamyl-tRNA(Gln) amidotransferase subunit A from Chromohalobacter salexigens (strain ATCC BAA-138 / DSM 3043 / CIP 106854 / NCIMB 13768 / 1H11).